The chain runs to 833 residues: pre-rRNA 2'-O-ribose RNA methyltransferase (833 aa).

S-adenosyl-L-methionine is bound by residues G57, W59, D77, D93, and D118. K158 (proton acceptor) is an active-site residue. 5 disordered regions span residues 323 to 349, 363 to 453, 475 to 640, 730 to 767, and 779 to 833; these read KLDNPDEEETEKPEEKKELTAEEMEEN, KKKR…DEYL, LDDV…SDED, LGKKMEKTRDKASSIVDNPEMSNREKSKAIEKLYSGTD, and IAKK…KNKK. A coiled-coil region spans residues 336-386; sequence EEKKELTAEEMEENLQEEMKEYLALVEKKKRKEKKRQNELKRKHQRKIELT. Over residues 363–381 the composition is skewed to basic residues; sequence KKKRKEKKRQNELKRKHQR. Residues 382 to 396 are compositionally biased toward basic and acidic residues; it reads KIELTMHIPGDKIEE. Positions 423–441 are enriched in acidic residues; that stretch reads SSDEFDSDDSDDDDDDDNN. Positions 455-485 form a coiled coil; that stretch reads QQLDEQYKLYQQRIRKKAAKLDDVKVKKDKI. The span at 475–486 shows a compositional bias: basic and acidic residues; that stretch reads LDDVKVKKDKIG. Acidic residues-rich tracts occupy residues 490–503 and 542–556; these read YNEDDEEFVEEQEE and SESEPEQDGDDDQDD. Residues 557-566 show a composition bias toward basic and acidic residues; it reads ENNKPIDISK. Acidic residues-rich tracts occupy residues 605 to 614 and 626 to 640; these read DKDDQDDDDD and PVQEEVEYESDSDED. 3 stretches are compositionally biased toward basic and acidic residues: residues 732–741, 751–767, and 794–806; these read KKMEKTRDKA, SNREKSKAIEKLYSGTD, and KIVDKRMKKDLRA.

It belongs to the class I-like SAM-binding methyltransferase superfamily. RNA methyltransferase RlmE family. SPB1 subfamily.

It localises to the nucleus. Its subcellular location is the nucleolus. It catalyses the reaction a ribonucleotide in rRNA + S-adenosyl-L-methionine = a 2'-O-methylribonucleotide in rRNA + S-adenosyl-L-homocysteine + H(+). In terms of biological role, RNA 2'-O-methyltransferase involved in the maturation of rRNA and in the biogenesis of ribosomal subunits. This Dictyostelium discoideum (Social amoeba) protein is pre-rRNA 2'-O-ribose RNA methyltransferase (fsjC).